Here is a 280-residue protein sequence, read N- to C-terminus: uncharacterized protein (280 aa).

Positions 1–35 (MQGQVLKKVLKKYVHIGMCTLFLHAILLFPCVAQA) are cleaved as a signal peptide.

This is an uncharacterized protein from Treponema pallidum (strain Nichols).